The following is a 1368-amino-acid chain: DNA-directed RNA polymerase subunit beta (1368 aa).

This sequence belongs to the RNA polymerase beta chain family. The RNAP catalytic core consists of 2 alpha, 1 beta, 1 beta' and 1 omega subunit. When a sigma factor is associated with the core the holoenzyme is formed, which can initiate transcription.

It carries out the reaction RNA(n) + a ribonucleoside 5'-triphosphate = RNA(n+1) + diphosphate. Its function is as follows. DNA-dependent RNA polymerase catalyzes the transcription of DNA into RNA using the four ribonucleoside triphosphates as substrates. The sequence is that of DNA-directed RNA polymerase subunit beta from Legionella pneumophila (strain Corby).